Reading from the N-terminus, the 458-residue chain is Probable ECA polymerase (458 aa).

The next 11 membrane-spanning stretches (helical) occupy residues 3-23, 37-57, 65-85, 112-132, 154-174, 180-200, 201-221, 222-242, 340-360, 377-397, and 409-429; these read LAQF…VLTL, VFFS…TCLL, VVPV…YAIY, THLT…IFFL, GVAL…VYFL, AWFF…VIVG, GTRA…IVRG, WISL…MFWL, LVVM…GMII, YKAA…IVLA, and VFFC…YWLF.

It belongs to the WzyE family. In terms of assembly, probably part of a complex composed of WzxE, WzyE and WzzE.

The protein resides in the cell inner membrane. It participates in bacterial outer membrane biogenesis; enterobacterial common antigen biosynthesis. Its function is as follows. Probably involved in the polymerization of enterobacterial common antigen (ECA) trisaccharide repeat units. The polypeptide is Probable ECA polymerase (Serratia proteamaculans (strain 568)).